The sequence spans 284 residues: Probable protein phosphatase 2C 41 (284 aa).

Positions 35–282 (SYGFYLVRGM…DDISCVVVRF (248 aa)) constitute a PPM-type phosphatase domain. Positions 72, 73, 234, and 273 each coordinate Mn(2+).

Belongs to the PP2C family. Mg(2+) is required as a cofactor. It depends on Mn(2+) as a cofactor.

The enzyme catalyses O-phospho-L-seryl-[protein] + H2O = L-seryl-[protein] + phosphate. It carries out the reaction O-phospho-L-threonyl-[protein] + H2O = L-threonyl-[protein] + phosphate. The sequence is that of Probable protein phosphatase 2C 41 from Oryza sativa subsp. japonica (Rice).